Consider the following 345-residue polypeptide: Probable dual-specificity RNA methyltransferase RlmN (345 aa).

E98 functions as the Proton acceptor in the catalytic mechanism. The Radical SAM core domain maps to 104 to 332 (TYKRLTVCVS…VSIRYSRGLE (229 aa)). C111 and C337 are disulfide-bonded. Residues C118, C122, and C125 each coordinate [4Fe-4S] cluster. S-adenosyl-L-methionine contacts are provided by residues 165–166 (GE), S195, 218–220 (SLH), and N294. Catalysis depends on C337, which acts as the S-methylcysteine intermediate.

This sequence belongs to the radical SAM superfamily. RlmN family. It depends on [4Fe-4S] cluster as a cofactor.

Its subcellular location is the cytoplasm. The enzyme catalyses adenosine(2503) in 23S rRNA + 2 reduced [2Fe-2S]-[ferredoxin] + 2 S-adenosyl-L-methionine = 2-methyladenosine(2503) in 23S rRNA + 5'-deoxyadenosine + L-methionine + 2 oxidized [2Fe-2S]-[ferredoxin] + S-adenosyl-L-homocysteine. It carries out the reaction adenosine(37) in tRNA + 2 reduced [2Fe-2S]-[ferredoxin] + 2 S-adenosyl-L-methionine = 2-methyladenosine(37) in tRNA + 5'-deoxyadenosine + L-methionine + 2 oxidized [2Fe-2S]-[ferredoxin] + S-adenosyl-L-homocysteine. Specifically methylates position 2 of adenine 2503 in 23S rRNA and position 2 of adenine 37 in tRNAs. This is Probable dual-specificity RNA methyltransferase RlmN from Trichodesmium erythraeum (strain IMS101).